Consider the following 827-residue polypeptide: Glycerol-3-phosphate acyltransferase (827 aa).

Positions 325–330 (CHRSHM) match the HXXXXD motif motif.

Belongs to the GPAT/DAPAT family.

The protein localises to the cell inner membrane. The catalysed reaction is sn-glycerol 3-phosphate + an acyl-CoA = a 1-acyl-sn-glycero-3-phosphate + CoA. The protein operates within phospholipid metabolism; CDP-diacylglycerol biosynthesis; CDP-diacylglycerol from sn-glycerol 3-phosphate: step 1/3. This is Glycerol-3-phosphate acyltransferase from Shigella flexneri serotype 5b (strain 8401).